A 167-amino-acid polypeptide reads, in one-letter code: ATP synthase subunit b (167 aa).

A helical transmembrane segment spans residues Ser7–Ala25.

The protein belongs to the ATPase B chain family. F-type ATPases have 2 components, F(1) - the catalytic core - and F(0) - the membrane proton channel. F(1) has five subunits: alpha(3), beta(3), gamma(1), delta(1), epsilon(1). F(0) has three main subunits: a(1), b(2) and c(10-14). The alpha and beta chains form an alternating ring which encloses part of the gamma chain. F(1) is attached to F(0) by a central stalk formed by the gamma and epsilon chains, while a peripheral stalk is formed by the delta and b chains.

The protein resides in the cell inner membrane. Its function is as follows. F(1)F(0) ATP synthase produces ATP from ADP in the presence of a proton or sodium gradient. F-type ATPases consist of two structural domains, F(1) containing the extramembraneous catalytic core and F(0) containing the membrane proton channel, linked together by a central stalk and a peripheral stalk. During catalysis, ATP synthesis in the catalytic domain of F(1) is coupled via a rotary mechanism of the central stalk subunits to proton translocation. Component of the F(0) channel, it forms part of the peripheral stalk, linking F(1) to F(0). This is ATP synthase subunit b from Rickettsia prowazekii (strain Madrid E).